The primary structure comprises 189 residues: MLERLKDSLVNSPVIKRGEYNYFIHPISDGVPSIDPRLIEEIANYIIRIADMDVDTILTIEAMGIPVANALSLKTGIPLTIVRKRPYFLEGEVELSQSTGYSKGVLYINGLKKGDRVVIVDDVISTGGTLLALVKALQNMGVEITDVISVIGRGAGYFKLRELGVEPKILVTIDVSEKGVEIQDVFGDQ.

It belongs to the purine/pyrimidine phosphoribosyltransferase family. Archaeal HPRT subfamily. Homodimer.

It localises to the cytoplasm. It carries out the reaction IMP + diphosphate = hypoxanthine + 5-phospho-alpha-D-ribose 1-diphosphate. The enzyme catalyses GMP + diphosphate = guanine + 5-phospho-alpha-D-ribose 1-diphosphate. It functions in the pathway purine metabolism; IMP biosynthesis via salvage pathway; IMP from hypoxanthine: step 1/1. Its function is as follows. Catalyzes a salvage reaction resulting in the formation of IMP that is energically less costly than de novo synthesis. The sequence is that of Hypoxanthine/guanine phosphoribosyltransferase (hpt) from Methanosarcina acetivorans (strain ATCC 35395 / DSM 2834 / JCM 12185 / C2A).